Here is a 370-residue protein sequence, read N- to C-terminus: DNA replication and repair protein RecF (370 aa).

Residue 33–40 participates in ATP binding; it reads GPNAAGKT.

This sequence belongs to the RecF family.

It is found in the cytoplasm. Functionally, the RecF protein is involved in DNA metabolism; it is required for DNA replication and normal SOS inducibility. RecF binds preferentially to single-stranded, linear DNA. It also seems to bind ATP. The chain is DNA replication and repair protein RecF from Moorella thermoacetica (strain ATCC 39073 / JCM 9320).